Reading from the N-terminus, the 442-residue chain is ORC1-type DNA replication protein 8 (442 aa).

ATP-binding positions include 66 to 70 and Y218; that span reads VGKTA.

Belongs to the CDC6/cdc18 family.

Functionally, involved in regulation of DNA replication. The chain is ORC1-type DNA replication protein 8 (cdc6h) from Haloarcula marismortui (strain ATCC 43049 / DSM 3752 / JCM 8966 / VKM B-1809) (Halobacterium marismortui).